We begin with the raw amino-acid sequence, 98 residues long: MPRSLKKGPFIDFKLEQRILDMNSKGEKKVLKTWSRSSMISPDFVGHTIAVHNGKTHVPVYVGDNMVGHKLGEFAPTRTFRGHAGGKAEKGGSAPKKK.

Residues 77–98 form a disordered region; the sequence is TRTFRGHAGGKAEKGGSAPKKK.

This sequence belongs to the universal ribosomal protein uS19 family.

Its function is as follows. Protein S19 forms a complex with S13 that binds strongly to the 16S ribosomal RNA. In Chlorobium phaeobacteroides (strain DSM 266 / SMG 266 / 2430), this protein is Small ribosomal subunit protein uS19.